The sequence spans 399 residues: Elongation factor Tu (399 aa).

In terms of domain architecture, tr-type G spans 10–209 (KPHVNIGTIG…AVDSYIPTPV (200 aa)). Residues 19–26 (GHVDHGKT) are G1. 19–26 (GHVDHGKT) contacts GTP. Thr26 is a binding site for Mg(2+). The tract at residues 60-64 (GITIA) is G2. The segment at 81–84 (DCPG) is G3. Residues 81–85 (DCPGH) and 136–139 (NKAD) each bind GTP. Residues 136–139 (NKAD) are G4. The G5 stretch occupies residues 174–176 (SAL).

This sequence belongs to the TRAFAC class translation factor GTPase superfamily. Classic translation factor GTPase family. EF-Tu/EF-1A subfamily. As to quaternary structure, monomer.

The protein localises to the cytoplasm. The catalysed reaction is GTP + H2O = GDP + phosphate + H(+). In terms of biological role, GTP hydrolase that promotes the GTP-dependent binding of aminoacyl-tRNA to the A-site of ribosomes during protein biosynthesis. The chain is Elongation factor Tu from Campylobacter concisus (strain 13826).